Reading from the N-terminus, the 443-residue chain is Tol-Pal system protein TolB (443 aa).

The N-terminal stretch at 1–31 (MTRLAKGKWRSTLGAMMALAVMVAAIPQARA) is a signal peptide. Residues 423–432 (NERQISTPTE) show a composition bias toward polar residues. The tract at residues 423–443 (NERQISTPTEASDPAWSPLLP) is disordered.

This sequence belongs to the TolB family. The Tol-Pal system is composed of five core proteins: the inner membrane proteins TolA, TolQ and TolR, the periplasmic protein TolB and the outer membrane protein Pal. They form a network linking the inner and outer membranes and the peptidoglycan layer.

It localises to the periplasm. Its function is as follows. Part of the Tol-Pal system, which plays a role in outer membrane invagination during cell division and is important for maintaining outer membrane integrity. The polypeptide is Tol-Pal system protein TolB (Rhodospirillum rubrum (strain ATCC 11170 / ATH 1.1.1 / DSM 467 / LMG 4362 / NCIMB 8255 / S1)).